A 368-amino-acid polypeptide reads, in one-letter code: Probable dual-specificity RNA methyltransferase RlmN (368 aa).

The Proton acceptor role is filled by glutamate 100. A Radical SAM core domain is found at 106-344; that stretch reads QHYGLSVCVT…CVVRQEHGTD (239 aa). Cysteine 113 and cysteine 349 are oxidised to a cystine. 3 residues coordinate [4Fe-4S] cluster: cysteine 120, cysteine 124, and cysteine 127. S-adenosyl-L-methionine is bound by residues 172-173, serine 204, 227-229, and asparagine 305; these read GE and SLH. Cysteine 349 functions as the S-methylcysteine intermediate in the catalytic mechanism.

It belongs to the radical SAM superfamily. RlmN family. The cofactor is [4Fe-4S] cluster.

The protein resides in the cytoplasm. The enzyme catalyses adenosine(2503) in 23S rRNA + 2 reduced [2Fe-2S]-[ferredoxin] + 2 S-adenosyl-L-methionine = 2-methyladenosine(2503) in 23S rRNA + 5'-deoxyadenosine + L-methionine + 2 oxidized [2Fe-2S]-[ferredoxin] + S-adenosyl-L-homocysteine. The catalysed reaction is adenosine(37) in tRNA + 2 reduced [2Fe-2S]-[ferredoxin] + 2 S-adenosyl-L-methionine = 2-methyladenosine(37) in tRNA + 5'-deoxyadenosine + L-methionine + 2 oxidized [2Fe-2S]-[ferredoxin] + S-adenosyl-L-homocysteine. Its function is as follows. Specifically methylates position 2 of adenine 2503 in 23S rRNA and position 2 of adenine 37 in tRNAs. The chain is Probable dual-specificity RNA methyltransferase RlmN from Streptococcus agalactiae serotype V (strain ATCC BAA-611 / 2603 V/R).